Consider the following 186-residue polypeptide: ATP-dependent protease subunit HslV (186 aa).

Thr-14 is an active-site residue. Residues Ala-168, Cys-171, and Thr-174 each contribute to the Na(+) site.

It belongs to the peptidase T1B family. HslV subfamily. As to quaternary structure, a double ring-shaped homohexamer of HslV is capped on each side by a ring-shaped HslU homohexamer. The assembly of the HslU/HslV complex is dependent on binding of ATP.

It localises to the cytoplasm. It catalyses the reaction ATP-dependent cleavage of peptide bonds with broad specificity.. Its activity is regulated as follows. Allosterically activated by HslU binding. Its function is as follows. Protease subunit of a proteasome-like degradation complex believed to be a general protein degrading machinery. The polypeptide is ATP-dependent protease subunit HslV (Methylorubrum extorquens (strain CM4 / NCIMB 13688) (Methylobacterium extorquens)).